The chain runs to 347 residues: Spermidine/putrescine import ATP-binding protein PotA (347 aa).

The ABC transporter domain occupies 6-238; it reads LEIRNLSHYY…PKTKFVADFI (233 aa). Residue 40 to 47 participates in ATP binding; it reads GPSGCGKT.

The protein belongs to the ABC transporter superfamily. Spermidine/putrescine importer (TC 3.A.1.11.1) family. As to quaternary structure, the complex is composed of two ATP-binding proteins (PotA), two transmembrane proteins (PotB and PotC) and a solute-binding protein (PotD).

The protein resides in the cell inner membrane. The catalysed reaction is ATP + H2O + polyamine-[polyamine-binding protein]Side 1 = ADP + phosphate + polyamineSide 2 + [polyamine-binding protein]Side 1.. In terms of biological role, part of the ABC transporter complex PotABCD involved in spermidine/putrescine import. Responsible for energy coupling to the transport system. The sequence is that of Spermidine/putrescine import ATP-binding protein PotA from Borrelia garinii subsp. bavariensis (strain ATCC BAA-2496 / DSM 23469 / PBi) (Borreliella bavariensis).